The sequence spans 119 residues: Protein yippee-like 3 (119 aa).

The Yippee domain occupies 19-116 (RRYSCVHCRA…IELSHMIKDN (98 aa)). Zn(2+)-binding residues include Cys23, Cys26, Cys79, and Cys82.

The protein belongs to the yippee family.

It is found in the nucleus. Its subcellular location is the nucleolus. May be involved in proliferation and apoptosis in myeloid precursor cells. The protein is Protein yippee-like 3 (ypel3) of Danio rerio (Zebrafish).